We begin with the raw amino-acid sequence, 213 residues long: Urease accessory protein UreE (213 aa).

Positions 170 to 213 (EHHGRSHSHSHSHSHDHDHDHDHDHDHDHQHGPSCSHGHGHGHR) are disordered. The segment covering 182 to 200 (HSHDHDHDHDHDHDHDHQH) has biased composition (basic and acidic residues).

The protein belongs to the UreE family.

It is found in the cytoplasm. Its function is as follows. Involved in urease metallocenter assembly. Binds nickel. Probably functions as a nickel donor during metallocenter assembly. In Burkholderia thailandensis (strain ATCC 700388 / DSM 13276 / CCUG 48851 / CIP 106301 / E264), this protein is Urease accessory protein UreE.